Reading from the N-terminus, the 60-residue chain is Large ribosomal subunit protein uL30 (60 aa).

The protein belongs to the universal ribosomal protein uL30 family. As to quaternary structure, part of the 50S ribosomal subunit.

The polypeptide is Large ribosomal subunit protein uL30 (Ralstonia pickettii (strain 12J)).